Reading from the N-terminus, the 401-residue chain is Beta-ketoadipyl-CoA thiolase (401 aa).

Cys-90 serves as the catalytic Acyl-thioester intermediate. Catalysis depends on proton acceptor residues His-357 and Cys-387.

The protein belongs to the thiolase-like superfamily. Thiolase family.

It carries out the reaction succinyl-CoA + acetyl-CoA = 3-oxoadipyl-CoA + CoA. The protein operates within aromatic compound metabolism; phenylacetate degradation. In terms of biological role, catalyzes thiolytic cleavage of beta-ketoadipyl-CoA to succinyl-CoA and acetyl-CoA. The polypeptide is Beta-ketoadipyl-CoA thiolase (paaJ) (Escherichia coli).